Consider the following 250-residue polypeptide: tRNA (guanine-N(1)-)-methyltransferase (250 aa).

S-adenosyl-L-methionine contacts are provided by residues glycine 113 and 133–138; that span reads IGDYVL.

The protein belongs to the RNA methyltransferase TrmD family. Homodimer.

The protein resides in the cytoplasm. The catalysed reaction is guanosine(37) in tRNA + S-adenosyl-L-methionine = N(1)-methylguanosine(37) in tRNA + S-adenosyl-L-homocysteine + H(+). Specifically methylates guanosine-37 in various tRNAs. This chain is tRNA (guanine-N(1)-)-methyltransferase, found in Photorhabdus laumondii subsp. laumondii (strain DSM 15139 / CIP 105565 / TT01) (Photorhabdus luminescens subsp. laumondii).